Reading from the N-terminus, the 273-residue chain is Proteasome subunit alpha (273 aa).

A disordered region spans residues aspartate 231 to serine 273. Residues proline 238–alanine 249 show a composition bias toward low complexity.

It belongs to the peptidase T1A family. The 20S proteasome core is composed of 14 alpha and 14 beta subunits that assemble into four stacked heptameric rings, resulting in a barrel-shaped structure. The two inner rings, each composed of seven catalytic beta subunits, are sandwiched by two outer rings, each composed of seven alpha subunits. The catalytic chamber with the active sites is on the inside of the barrel. Has a gated structure, the ends of the cylinder being occluded by the N-termini of the alpha-subunits. Is capped by the proteasome-associated ATPase, ARC.

The protein resides in the cytoplasm. The protein operates within protein degradation; proteasomal Pup-dependent pathway. The formation of the proteasomal ATPase ARC-20S proteasome complex, likely via the docking of the C-termini of ARC into the intersubunit pockets in the alpha-rings, may trigger opening of the gate for substrate entry. Interconversion between the open-gate and close-gate conformations leads to a dynamic regulation of the 20S proteasome proteolysis activity. In terms of biological role, component of the proteasome core, a large protease complex with broad specificity involved in protein degradation. The protein is Proteasome subunit alpha of Salinispora arenicola (strain CNS-205).